The sequence spans 422 residues: Steroid hormone receptor ERR1 (422 aa).

A disordered region spans residues 1-67; the sequence is MSSQVVGIEP…GAGPGEQGGG (67 aa). A phosphoserine mark is found at serine 19 and serine 22. The segment covering 58–67 has biased composition (gly residues); sequence GAGPGEQGGG. Positions 76–151 form a DNA-binding region, nuclear receptor; sequence KRLCLVCGDV…VGMLKEGVRL (76 aa). 2 consecutive NR C4-type zinc fingers follow at residues 79–99 and 115–134; these read CLVC…CEAC and CPAS…CQAC. 4 positions are modified to N6-acetyllysine; by PCAF/KAT2B: lysine 129, lysine 138, lysine 160, and lysine 162. Glycyl lysine isopeptide (Lys-Gly) (interchain with G-Cter in SUMO2) cross-links involve residues lysine 189 and lysine 402. The region spanning 192 to 420 is the NR LBD domain; it reads PVNALVSHLL…KLFLEMLEAM (229 aa).

The protein belongs to the nuclear hormone receptor family. NR3 subfamily. In terms of assembly, binds DNA as a monomer or a homodimer. Interacts (via the AF2 domain) with coactivator PPARGC1A (via the L3 motif); the interaction greatly enhances transcriptional activity of genes involved in energy metabolism. Interacts with PIAS4; the interaction enhances sumoylation. Interacts with MAPK15; promotes re-localization of ESRRA to the cytoplasm through a XPO1-dependent mechanism then inhibits ESRRA transcriptional activity. Phosphorylation on Ser-19 enhances sumoylation on Lys-14 increasing repression of transcriptional activity. Post-translationally, sumoylated with SUMO2. Main site is Lys-14 which is enhanced by phosphorylation on Ser-19, cofactor activation, and by interaction with PIAS4. Sumoylation enhances repression of transcriptional activity, but has no effect on subcellular location nor on DNA binding. In terms of processing, reversibly acetylated. Acetylation by PCAF/KAT2 at Lys-129, Lys-138, Lys-160 and Lys-162 and PCAF/KAT2 decreases transcriptional activity probably by inhibiting DNA-binding activity; deacetylation involves SIRT1 and HDAC8 and increases DNA-binding.

The protein resides in the nucleus. The protein localises to the cytoplasm. Binds to an ERR-alpha response element (ERRE) containing a single consensus half-site, 5'-TNAAGGTCA-3'. Can bind to the medium-chain acyl coenzyme A dehydrogenase (MCAD) response element NRRE-1 and may act as an important regulator of MCAD promoter. May function as a modulator of the estrogen signaling pathway in the uterus. Induces the expression of PERM1 in the skeletal muscle. In Canis lupus familiaris (Dog), this protein is Steroid hormone receptor ERR1 (ESRRA).